Reading from the N-terminus, the 73-residue chain is Bacterioferritin-associated ferredoxin (73 aa).

[2Fe-2S] cluster is bound by residues C4 and C6. Phosphate-binding residues include R26 and R29. [2Fe-2S] cluster-binding residues include C38 and C41. K46 is a binding site for phosphate.

Belongs to the Bfd family. As to quaternary structure, monomer. Interacts with BfrB; up to 12 Bfd proteins can bind to the BfrB bacterioferritin complex (BFR). One Bfd protein binds to a BfrB dimer in the BFR, with the [2Fe-2S] cluster positioned about 22 Angstroms above the heme of BfrB. Does not interact with FtnA. [2Fe-2S] cluster serves as cofactor. The cofactor is phosphate.

Functionally, required for mobilization of iron from the bacterioferritin (BFR) complex, composed of BfrB and FtnA in varying proportions; mobilization requires the [2Fe-2S] cluster of this protein. Reduction of the BfrB heme group occurs in the presence of Bfd, strongly suggesting that the BfrB-Bfd complex allows heme to mediate electron transfer from FPR to the Fe(3+) iron core in the BFR prior to its release as Fe(2+). The chain is Bacterioferritin-associated ferredoxin from Pseudomonas aeruginosa (strain ATCC 15692 / DSM 22644 / CIP 104116 / JCM 14847 / LMG 12228 / 1C / PRS 101 / PAO1).